Here is a 195-residue protein sequence, read N- to C-terminus: Thymidine kinase (195 aa).

ATP is bound by residues 9 to 16 (STMNAGKS) and 87 to 90 (DEAQ). The Proton acceptor role is filled by glutamate 88. 4 residues coordinate Zn(2+): cysteine 145, cysteine 147, cysteine 182, and histidine 185.

This sequence belongs to the thymidine kinase family. In terms of assembly, homotetramer.

Its subcellular location is the cytoplasm. It catalyses the reaction thymidine + ATP = dTMP + ADP + H(+). This Mannheimia succiniciproducens (strain KCTC 0769BP / MBEL55E) protein is Thymidine kinase.